We begin with the raw amino-acid sequence, 436 residues long: CaM kinase-like vesicle-associated protein (436 aa).

Residues Y24 to I286 form the Protein kinase domain. The segment at A328–G436 is disordered. Residues T333 to V409 show a composition bias toward low complexity.

This sequence belongs to the protein kinase superfamily. CAMK Ser/Thr protein kinase family. Interacts with calmodulin, in the presence of calcium. Ca(2+) serves as cofactor.

The protein localises to the cytoplasmic vesicle membrane. Functionally, does not appear to have detectable kinase activity. The protein is CaM kinase-like vesicle-associated protein (camkv) of Danio rerio (Zebrafish).